Reading from the N-terminus, the 70-residue chain is Large ribosomal subunit protein bL31 (70 aa).

Residues Cys-16, Cys-18, Cys-37, and Cys-40 each contribute to the Zn(2+) site.

It belongs to the bacterial ribosomal protein bL31 family. Type A subfamily. Part of the 50S ribosomal subunit. The cofactor is Zn(2+).

In terms of biological role, binds the 23S rRNA. The sequence is that of Large ribosomal subunit protein bL31 from Shewanella frigidimarina (strain NCIMB 400).